A 33-amino-acid polypeptide reads, in one-letter code: Beta-theraphotoxin-Cm1a (33 aa).

Cystine bridges form between Cys2-Cys17, Cys9-Cys22, and Cys16-Cys29. The residue at position 33 (Leu33) is a Leucine amide.

Belongs to the neurotoxin 10 (Hwtx-1) family. 04 (CcoTx1) subfamily. Expressed by the venom gland.

Its subcellular location is the secreted. Functionally, inhibits many voltage-gated sodium channels and one voltage-gated calcium channel (Cav2.2/CACNA1B (IC(50)=400 nM), Nav1.2/SCN2A (IC(50)=3-70 nM), Nav1.1/SCN1A (IC(50)=523-1060 nM), Nav1.7/SCN9A (IC(50)=129.1-5120 nM), Nav1.4/SCN4A (IC(50)=263-888 nM or &gt;10 uM) and Nav1.5/SCN5A (IC(50)=188-323 nM or &gt;10 uM)). It acts by shifting the voltage dependence of channel activation to more depolarized potentials and by blocking the inward component of the sodium current. It shows moderate affinity for lipid bilayers. On Nav1.7/SCN9A, it has been shown to interact with the S3-S4 loop of domain DII (site 4). Is significantly more potent against Nav1.2/SCN2A than the other Nav channel subtypes. In vivo, this toxin causes general ataxia, lack of response to stimuli, and semiparalysis. After a few minutes, the mice are unable to stand, and breathing is reduced in rhythm and intensity. Symptoms gradually increase with progressive slowing of breathing and flaccid paralysis, death occurred within 10 to 20 minutes post injection. Animals remain totally flaccid, and no symptoms of excitatory neurotoxicity are observed. In Ceratogyrus marshalli (Straighthorned baboon tarantula), this protein is Beta-theraphotoxin-Cm1a.